A 29-amino-acid chain; its full sequence is Trypsin inhibitor 5 (29 aa).

3 cysteine pairs are disulfide-bonded: cysteine 3–cysteine 20, cysteine 10–cysteine 22, and cysteine 16–cysteine 28.

Belongs to the protease inhibitor I7 (squash-type serine protease inhibitor) family.

Its subcellular location is the secreted. Its function is as follows. Strongly inhibits trypsin, weakly inhibits chymotrypsin. The chain is Trypsin inhibitor 5 from Cyclanthera pedata (Achocha).